A 289-amino-acid polypeptide reads, in one-letter code: Nucleotide-binding protein COPRO5265_0725 (289 aa).

9–16 serves as a coordination point for ATP; the sequence is GLSGAGKS. Position 59 to 62 (59 to 62) interacts with GTP; the sequence is DSRS.

Belongs to the RapZ-like family.

In terms of biological role, displays ATPase and GTPase activities. This is Nucleotide-binding protein COPRO5265_0725 from Coprothermobacter proteolyticus (strain ATCC 35245 / DSM 5265 / OCM 4 / BT).